The following is a 184-amino-acid chain: Elongation factor P (184 aa).

It belongs to the elongation factor P family.

The protein localises to the cytoplasm. It participates in protein biosynthesis; polypeptide chain elongation. In terms of biological role, involved in peptide bond synthesis. Stimulates efficient translation and peptide-bond synthesis on native or reconstituted 70S ribosomes in vitro. Probably functions indirectly by altering the affinity of the ribosome for aminoacyl-tRNA, thus increasing their reactivity as acceptors for peptidyl transferase. The protein is Elongation factor P of Polaromonas naphthalenivorans (strain CJ2).